A 255-amino-acid polypeptide reads, in one-letter code: Aliphatic sulfonates import ATP-binding protein SsuB (255 aa).

In terms of domain architecture, ABC transporter spans 12–233 (LLLNAVSKHY…RLGSVRLAEL (222 aa)). 44–51 (GRSGGGKS) is an ATP binding site.

This sequence belongs to the ABC transporter superfamily. Aliphatic sulfonates importer (TC 3.A.1.17.2) family. The complex is composed of two ATP-binding proteins (SsuB), two transmembrane proteins (SsuC) and a solute-binding protein (SsuA).

It is found in the cell inner membrane. It carries out the reaction ATP + H2O + aliphatic sulfonate-[sulfonate-binding protein]Side 1 = ADP + phosphate + aliphatic sulfonateSide 2 + [sulfonate-binding protein]Side 1.. Part of the ABC transporter complex SsuABC involved in aliphatic sulfonates import. Responsible for energy coupling to the transport system. The chain is Aliphatic sulfonates import ATP-binding protein SsuB from Escherichia coli (strain K12).